A 309-amino-acid polypeptide reads, in one-letter code: Serine/threonine-protein phosphatase 2A catalytic subunit beta isoform (309 aa).

Mn(2+)-binding residues include D57, H59, D85, and N117. Residue H118 is the Proton donor of the active site. Positions 167 and 241 each coordinate Mn(2+). Y307 is modified (phosphotyrosine). Position 309 is a leucine methyl ester (L309).

It belongs to the PPP phosphatase family. PP-1 subfamily. PP2A consists of a common heterodimeric core enzyme (composed of a 36 kDa catalytic subunit (subunit C) and a 65 kDa constant regulatory subunit (PR65) (subunit A)) that associates with a variety of regulatory subunits. Proteins that associate with the core dimer include three families of regulatory subunits B (the R2/B/PR55/B55, R3/B''/PR72/PR130/PR59 and R5/B'/B56 families), the 48 kDa variable regulatory subunit, viral proteins, and cell signaling molecules. Binds PPME1. May indirectly interact with SGO1, most probably through regulatory B56 subunits. Interacts with CTTNBP2NL. Interacts with PTPA. Found in a complex with at least ARL2, PPP2CB, PPP2R1A, PPP2R2A, PPP2R5E and TBCD. Interacts with TBCD. Part of the core of STRIPAK complexes composed of PP2A catalytic and scaffolding subunits, the striatins (PP2A regulatory subunits), the striatin-associated proteins MOB4, STRIP1 and STRIP2, PDCD10 and members of the STE20 kinases, such as STK24 and STK26. Mn(2+) is required as a cofactor. In terms of processing, reversibly methyl esterified on Leu-309 by leucine carboxyl methyltransferase 1 (Lcmt1) and protein phosphatase methylesterase 1 (Ppme1). Carboxyl methylation influences the affinity of the catalytic subunit for the different regulatory subunits, thereby modulating the PP2A holoenzyme's substrate specificity, enzyme activity and cellular localization. Phosphorylation of either threonine (by autophosphorylation-activated protein kinase) or tyrosine results in inactivation of the phosphatase. Auto-dephosphorylation has been suggested as a mechanism for reactivation. Post-translationally, may be monoubiquitinated by NOSIP.

It localises to the cytoplasm. The protein localises to the nucleus. It is found in the chromosome. Its subcellular location is the centromere. The protein resides in the cytoskeleton. It localises to the spindle pole. It catalyses the reaction O-phospho-L-seryl-[protein] + H2O = L-seryl-[protein] + phosphate. It carries out the reaction O-phospho-L-threonyl-[protein] + H2O = L-threonyl-[protein] + phosphate. In terms of biological role, catalytic subunit of protein phosphatase 2A (PP2A), a serine/threonine phosphatase involved in the regulation of a wide variety of enzymes, signal transduction pathways, and cellular events. PP2A can modulate the activity of phosphorylase B kinase, casein kinase 2, mitogen-stimulated S6 kinase, and MAP-2 kinase. Part of the striatin-interacting phosphatase and kinase (STRIPAK) complexes. STRIPAK complexes have critical roles in protein (de)phosphorylation and are regulators of multiple signaling pathways including Hippo, MAPK, nuclear receptor and cytoskeleton remodeling. Different types of STRIPAK complexes are involved in a variety of biological processes such as cell growth, differentiation, apoptosis, metabolism and immune regulation. This Mus musculus (Mouse) protein is Serine/threonine-protein phosphatase 2A catalytic subunit beta isoform (Ppp2cb).